Reading from the N-terminus, the 186-residue chain is ATP synthase subunit delta (186 aa).

The protein belongs to the ATPase delta chain family. F-type ATPases have 2 components, F(1) - the catalytic core - and F(0) - the membrane proton channel. F(1) has five subunits: alpha(3), beta(3), gamma(1), delta(1), epsilon(1). F(0) has three main subunits: a(1), b(2) and c(10-14). The alpha and beta chains form an alternating ring which encloses part of the gamma chain. F(1) is attached to F(0) by a central stalk formed by the gamma and epsilon chains, while a peripheral stalk is formed by the delta and b chains.

It is found in the cell inner membrane. In terms of biological role, f(1)F(0) ATP synthase produces ATP from ADP in the presence of a proton or sodium gradient. F-type ATPases consist of two structural domains, F(1) containing the extramembraneous catalytic core and F(0) containing the membrane proton channel, linked together by a central stalk and a peripheral stalk. During catalysis, ATP synthesis in the catalytic domain of F(1) is coupled via a rotary mechanism of the central stalk subunits to proton translocation. Its function is as follows. This protein is part of the stalk that links CF(0) to CF(1). It either transmits conformational changes from CF(0) to CF(1) or is implicated in proton conduction. The protein is ATP synthase subunit delta of Azorhizobium caulinodans (strain ATCC 43989 / DSM 5975 / JCM 20966 / LMG 6465 / NBRC 14845 / NCIMB 13405 / ORS 571).